The primary structure comprises 574 residues: Sulfate adenylyltransferase (574 aa).

Residues 1-169 form an N-terminal region; it reads MANPPHGGVL…IEAINKLNHY (169 aa). Residues 170–394 form a catalytic region; the sequence is DYVALRYTPA…LRESSPPRHT (225 aa). Q197 is a sulfate binding site. Residues 197–200 and 291–294 contribute to the ATP site; these read QTRN and GRDH. Residues T198, R199, and N200 contribute to the active site. R199 serves as a coordination point for sulfate. Sulfate is bound at residue A295. ATP is bound at residue V333. The allosteric regulation domain; adenylyl-sulfate kinase-like stretch occupies residues 395 to 574; it reads QGFTIFLTGY…LETEGFFDRS (180 aa). 3'-phosphoadenylyl sulfate contacts are provided by residues 434 to 437, R451, 477 to 478, and R516; these read DTVR and IA.

This sequence in the N-terminal section; belongs to the sulfate adenylyltransferase family. The protein in the C-terminal section; belongs to the APS kinase family. Homohexamer. Dimer of trimers.

The protein resides in the cytoplasm. It catalyses the reaction sulfate + ATP + H(+) = adenosine 5'-phosphosulfate + diphosphate. Its pathway is sulfur metabolism; hydrogen sulfide biosynthesis; sulfite from sulfate: step 1/3. With respect to regulation, allosterically inhibited by 3'-phosphoadenosine 5'-phosphosulfate (PAPS). Catalyzes the first intracellular reaction of sulfate assimilation, forming adenosine-5'-phosphosulfate (APS) from inorganic sulfate and ATP. Plays an important role in sulfate activation as a component of the biosynthesis pathway of sulfur-containing amino acids. The sequence is that of Sulfate adenylyltransferase from Neosartorya fischeri (strain ATCC 1020 / DSM 3700 / CBS 544.65 / FGSC A1164 / JCM 1740 / NRRL 181 / WB 181) (Aspergillus fischerianus).